The primary structure comprises 72 residues: Large ribosomal subunit protein bL31 (72 aa).

Zn(2+) contacts are provided by cysteine 16, cysteine 18, cysteine 38, and cysteine 41.

The protein belongs to the bacterial ribosomal protein bL31 family. Type A subfamily. As to quaternary structure, part of the 50S ribosomal subunit. It depends on Zn(2+) as a cofactor.

Binds the 23S rRNA. In Aliivibrio salmonicida (strain LFI1238) (Vibrio salmonicida (strain LFI1238)), this protein is Large ribosomal subunit protein bL31.